The chain runs to 315 residues: p-hydroxyphenylacetate 3-hydroxylase, reductase component (315 aa).

Belongs to the non-flavoprotein flavin reductase family. In terms of assembly, homodimer. The p-hydroxyphenylacetate 3-hydroxylase (HpaH) is composed of an oxygenase component C2 and a reductase component C1.

It catalyses the reaction a reduced flavin + NAD(+) = an oxidized flavin + NADH + 2 H(+). It participates in aromatic compound metabolism; 4-hydroxyphenylacetate degradation; pyruvate and succinate semialdehyde from 4-hydroxyphenylacetate: step 1/7. Its activity is regulated as follows. Flavin concentrations greater than 15 uM do not inhibit the NADH oxidation activity of the reductase component C1 but do affect the hydroxylation activity of the C1-C2 complex. Maximal reductase activity is achieved only upon HPA binding to the reductase component C1 before interaction with NADH. HPA stimulates the rates of both the reduction of FMN and release of reduced FMN from the reductase component. Functionally, reductase component of a two-component system that supplies reduced FMN (FMNH2) to the oxygenase component to catalyze the hydroxylation of 4-hydroxyphenylacetic acid, leading to the production of 3,4-dihydroxyphenylacetate (3,4-DHPA). Catalyzes the reduction of free flavins (FMN, FAD and riboflavin) by NADH. Subsequently, the reduced flavins diffuse to the oxygenase component C2. This is p-hydroxyphenylacetate 3-hydroxylase, reductase component from Acinetobacter baumannii.